Reading from the N-terminus, the 330-residue chain is Class III chitinase ARB_03514 (330 aa).

The signal sequence occupies residues 1-22 (MSSVKNILSFVALFAGVKTAYA). The region spanning 23–314 (GLNSPGHNNV…SAVKGALSAG (292 aa)) is the GH18 domain. 2 N-linked (GlcNAc...) asparagine glycosylation sites follow: asparagine 61 and asparagine 135. Catalysis depends on glutamate 155, which acts as the Proton donor. Residues asparagine 278 and asparagine 302 are each glycosylated (N-linked (GlcNAc...) asparagine).

This sequence belongs to the glycosyl hydrolase 18 family. Chitinase class III subfamily. Monomer.

It localises to the secreted. The enzyme catalyses Random endo-hydrolysis of N-acetyl-beta-D-glucosaminide (1-&gt;4)-beta-linkages in chitin and chitodextrins.. Its function is as follows. Secreted chitinase involved in the degradation of chitin, a component of the cell walls of fungi and exoskeletal elements of some animals (including worms and arthropods). Plays a morphogenetic role during apical growth, cell division and differentiation (cell wall morphogenesis). The polypeptide is Class III chitinase ARB_03514 (Arthroderma benhamiae (strain ATCC MYA-4681 / CBS 112371) (Trichophyton mentagrophytes)).